Here is a 313-residue protein sequence, read N- to C-terminus: NADH-ubiquinone oxidoreductase chain 1 (313 aa).

Transmembrane regions (helical) follow at residues 6–26, 31–51, 62–82, 84–104, 109–129, 142–162, 183–203, 216–235, 250–270, and 286–306; these read IIIIIIIDILVVLILTGFVSL, ILALVQIRIGPALCFFGILTP, FIIFVISFDIIYLIGAMIITA, CIFLGWFYFPIGFILLLDTGF, MLCVHVFCSMFSTFFVGCFLF, MFFSIISESGIFLLYTTIYSL, FYIAGVLFISVFWVSMLLDGL, LVAGLITELSGFFFVLYSVL, LCFGGLFICFKAILILIFGFF, and AFILIFLFYMCVLMFIWLFTT.

It belongs to the complex I subunit 1 family.

The protein resides in the mitochondrion inner membrane. It carries out the reaction a ubiquinone + NADH + 5 H(+)(in) = a ubiquinol + NAD(+) + 4 H(+)(out). Its function is as follows. Core subunit of the mitochondrial membrane respiratory chain NADH dehydrogenase (Complex I) that is believed to belong to the minimal assembly required for catalysis. Complex I functions in the transfer of electrons from NADH to the respiratory chain. The immediate electron acceptor for the enzyme is believed to be ubiquinone. The polypeptide is NADH-ubiquinone oxidoreductase chain 1 (ND1) (Leishmania tarentolae (Sauroleishmania tarentolae)).